Here is a 119-residue protein sequence, read N- to C-terminus: Achromolysin (119 aa).

This sequence belongs to the peptidase M4 family. Requires Ca(2+) as cofactor. Zn(2+) serves as cofactor.

It is found in the secreted. Its function is as follows. Has staphylolytic activity. The protein is Achromolysin of Achromobacter lyticus.